The sequence spans 389 residues: MLLALAQWLQNDASFLRVFSYLTFRAVMATITALLIGLVCGPAVIRKLTAMKVGQAVRKDGPQTHLVKSGTPTMGGVLILLGIAVATLLWADLTNRFIWIVMLVTFGFGVIGWVDDYRKVVYKDPRGMSSREKYFWQSVIGLFAAVYLAFSVSEASNVRVFDLFMAWVRSGLSMGLPPHADLMLPFVKSISYPLGVWGFIVLTYLVIVGASNAVNLTDGLDGLVIMPVVLVGASLGVFAYVMGSSVYSKYLLFPHIAGAGELLIFCSAMGGAGLAFLWFNTHPAQMFMGDVGALALGGALGTVAVIVRQEIVLFIMGGIFVAETLSVMLQVTWFKFTKRRFGEGRRLFKMAPLHHHFELSGWKETQVVVRFWIITLMLCLFGLSTLKLR.

10 helical membrane-spanning segments follow: residues 25 to 45 (RAVMATITALLIGLVCGPAVI), 73 to 93 (TMGGVLILLGIAVATLLWADL), 97 to 117 (FIWIVMLVTFGFGVIGWVDDY), 135 to 155 (FWQSVIGLFAAVYLAFSVSEA), 190 to 210 (ISYPLGVWGFIVLTYLVIVGA), 222 to 242 (GLVIMPVVLVGASLGVFAYVM), 259 to 279 (AGELLIFCSAMGGAGLAFLWF), 287 to 307 (FMGDVGALALGGALGTVAVIV), 311 to 331 (IVLFIMGGIFVAETLSVMLQV), and 366 to 386 (QVVVRFWIITLMLCLFGLSTL).

It belongs to the glycosyltransferase 4 family. MraY subfamily. Mg(2+) serves as cofactor.

It localises to the cell inner membrane. It carries out the reaction UDP-N-acetyl-alpha-D-muramoyl-L-alanyl-gamma-D-glutamyl-meso-2,6-diaminopimeloyl-D-alanyl-D-alanine + di-trans,octa-cis-undecaprenyl phosphate = di-trans,octa-cis-undecaprenyl diphospho-N-acetyl-alpha-D-muramoyl-L-alanyl-D-glutamyl-meso-2,6-diaminopimeloyl-D-alanyl-D-alanine + UMP. Its pathway is cell wall biogenesis; peptidoglycan biosynthesis. Functionally, catalyzes the initial step of the lipid cycle reactions in the biosynthesis of the cell wall peptidoglycan: transfers peptidoglycan precursor phospho-MurNAc-pentapeptide from UDP-MurNAc-pentapeptide onto the lipid carrier undecaprenyl phosphate, yielding undecaprenyl-pyrophosphoryl-MurNAc-pentapeptide, known as lipid I. This chain is Phospho-N-acetylmuramoyl-pentapeptide-transferase, found in Paraburkholderia phytofirmans (strain DSM 17436 / LMG 22146 / PsJN) (Burkholderia phytofirmans).